The primary structure comprises 258 residues: Phosphate import ATP-binding protein PstB (258 aa).

An ABC transporter domain is found at 5–247 (IDVSGLNAYY…ERIFSNPSVQ (243 aa)). 37 to 44 (GPSGCGKS) contacts ATP.

This sequence belongs to the ABC transporter superfamily. Phosphate importer (TC 3.A.1.7) family. As to quaternary structure, the complex is composed of two ATP-binding proteins (PstB), two transmembrane proteins (PstC and PstA) and a solute-binding protein (PstS).

It is found in the cell membrane. The catalysed reaction is phosphate(out) + ATP + H2O = ADP + 2 phosphate(in) + H(+). Its function is as follows. Part of the ABC transporter complex PstSACB involved in phosphate import. Responsible for energy coupling to the transport system. This chain is Phosphate import ATP-binding protein PstB, found in Streptomyces coelicolor (strain ATCC BAA-471 / A3(2) / M145).